A 352-amino-acid polypeptide reads, in one-letter code: Hematopoietic SH2 domain-containing protein (352 aa).

One can recognise an SH2 domain in the interval 34-125 (WFHGAISRED…PRRELLTQPC (92 aa)). 2 disordered regions span residues 157–199 (EEAS…LGET) and 241–352 (VISG…PGYC). Residues 180 to 191 (RITTKEATSSCP) are compositionally biased toward polar residues. Basic and acidic residues predominate over residues 283–295 (PKDRKVPTRKAER). Positions 343–352 (QPPPFAPGYC) are enriched in pro residues.

Interacts with FES and TNK2. Post-translationally, may be phosphorylated by FES and ACK1. Predominantly expressed in spleen and hematopoietic cells such as peripheral blood leukocytes and weakly expressed in prostate, thymus, heart, small intestine and placenta.

It is found in the cytoplasm. Its subcellular location is the nucleus. Its function is as follows. May be a modulator of the apoptotic response through its ability to affect mitochondrial stability. Adapter protein involved in tyrosine kinase and CD28 signaling. Seems to affect CD28-mediated activation of the RE/AP element of the interleukin-2 promoter. In Homo sapiens (Human), this protein is Hematopoietic SH2 domain-containing protein (HSH2D).